A 555-amino-acid polypeptide reads, in one-letter code: Polypyrimidine tract-binding protein 1 (555 aa).

An N-acetylmethionine modification is found at Met-1. Ser-16 is subject to Phosphoserine. RRM domains lie at 58–142, 183–259, and 361–412; these read RVIH…SSPN, LRII…FSKL, and SVLL…SQAQ. Lys-64 is covalently cross-linked (Glycyl lysine isopeptide (Lys-Gly) (interchain with G-Cter in SUMO2)). Tyr-126 carries the post-translational modification Phosphotyrosine. A Phosphothreonine modification is found at Thr-137. The residue at position 140 (Ser-140) is a Phosphoserine. A Glycyl lysine isopeptide (Lys-Gly) (interchain with G-Cter in SUMO2) cross-link involves residue Lys-217. A disordered region spans residues 435-457; it reads HQSVQLPREGQEDQGLTKDYGSS. A Phosphoserine modification is found at Ser-457. The RRM 4 domain maps to 478–553; sequence ATLHLSNIPP…HHLRVSFSKS (76 aa).

As to quaternary structure, monomer. Part of a ternary complex containing KHSRP, PTBP1, PTBP2 and HNRPH1. Interacts with SFPQ. Interacts with RAVER1. Interacts with IVNS1ABP (via BACK domain); the interaction is direct. As to expression, expressed in myoblast; expression gradually decreases during muscle cell differentiation (at protein level).

Its subcellular location is the nucleus. Plays a role in pre-mRNA splicing and in the regulation of alternative splicing events. Activates exon skipping of its own pre-mRNA during muscle cell differentiation. Binds to the polypyrimidine tract of introns. May promote RNA looping when bound to two separate polypyrimidine tracts in the same pre-mRNA. May promote the binding of U2 snRNP to pre-mRNA. Cooperates with RAVER1 to modulate switching between mutually exclusive exons during maturation of the TPM1 pre-mRNA. Represses the splicing of MAPT/Tau exon 10. Binds to polypyrimidine-rich controlling element (PCE) of CFTR and promotes exon skipping of CFTR exon 9, thereby antagonizing TIA1 and its role in exon inclusion of CFTR exon 9. Plays a role in the splicing of pyruvate kinase PKM by binding repressively to a polypyrimidine tract flanking PKM exon 9, inhibiting exon 9 inclusion and resulting in exon 10 inclusion and production of the PKM M2 isoform. This Mus musculus (Mouse) protein is Polypyrimidine tract-binding protein 1 (Ptbp1).